The primary structure comprises 248 residues: Ubiquinone/menaquinone biosynthesis C-methyltransferase UbiE (248 aa).

S-adenosyl-L-methionine contacts are provided by Ser-68 and Asp-92.

It belongs to the class I-like SAM-binding methyltransferase superfamily. MenG/UbiE family.

The enzyme catalyses a 2-demethylmenaquinol + S-adenosyl-L-methionine = a menaquinol + S-adenosyl-L-homocysteine + H(+). The catalysed reaction is a 2-methoxy-6-(all-trans-polyprenyl)benzene-1,4-diol + S-adenosyl-L-methionine = a 5-methoxy-2-methyl-3-(all-trans-polyprenyl)benzene-1,4-diol + S-adenosyl-L-homocysteine + H(+). The protein operates within quinol/quinone metabolism; menaquinone biosynthesis; menaquinol from 1,4-dihydroxy-2-naphthoate: step 2/2. Its pathway is cofactor biosynthesis; ubiquinone biosynthesis. Methyltransferase required for the conversion of demethylmenaquinol (DMKH2) to menaquinol (MKH2) and the conversion of 2-polyprenyl-6-methoxy-1,4-benzoquinol (DDMQH2) to 2-polyprenyl-3-methyl-6-methoxy-1,4-benzoquinol (DMQH2). In Rickettsia felis (strain ATCC VR-1525 / URRWXCal2) (Rickettsia azadi), this protein is Ubiquinone/menaquinone biosynthesis C-methyltransferase UbiE.